The chain runs to 558 residues: SPATS2-like protein (558 aa).

Alanine 2 is modified (N-acetylalanine). Positions 63-79 (GKKKNNKRKRSKSKQHQ) are enriched in basic residues. Residues 63–204 (GKKKNNKRKR…SPVKSNAPAA (142 aa)) are disordered. 2 stretches are compositionally biased toward basic and acidic residues: residues 80-92 (GNKD…ERPE) and 110-142 (GCEK…EPPR). Position 120 is a phosphoserine (serine 120). The stretch at 279–344 (KEEAMDILTA…ARFSCDIEQL (66 aa)) forms a coiled coil. Disordered regions lie at residues 385–406 (GNFA…ANPK) and 421–514 (TMPT…RQHA). Over residues 421 to 433 (TMPTNKQQNGPSS) the composition is skewed to polar residues. Residues 469 to 485 (HEHRRQPHNGFRPKNKG) show a composition bias toward basic residues.

Belongs to the SPATS2 family.

The protein resides in the cytoplasm. Its subcellular location is the nucleus. The protein localises to the nucleolus. This Mus musculus (Mouse) protein is SPATS2-like protein (Spats2l).